A 932-amino-acid polypeptide reads, in one-letter code: Glycine dehydrogenase (decarboxylating) (932 aa).

Position 685 is an N6-(pyridoxal phosphate)lysine (Lys685).

It belongs to the GcvP family. The glycine cleavage system is composed of four proteins: P, T, L and H. Requires pyridoxal 5'-phosphate as cofactor.

It catalyses the reaction N(6)-[(R)-lipoyl]-L-lysyl-[glycine-cleavage complex H protein] + glycine + H(+) = N(6)-[(R)-S(8)-aminomethyldihydrolipoyl]-L-lysyl-[glycine-cleavage complex H protein] + CO2. In terms of biological role, the glycine cleavage system catalyzes the degradation of glycine. The P protein binds the alpha-amino group of glycine through its pyridoxal phosphate cofactor; CO(2) is released and the remaining methylamine moiety is then transferred to the lipoamide cofactor of the H protein. This is Glycine dehydrogenase (decarboxylating) from Brucella canis (strain ATCC 23365 / NCTC 10854 / RM-666).